The chain runs to 334 residues: uncharacterized protein (334 aa).

5 WD repeats span residues 56–86 (LKGE…KLWT), 98–128 (KPVA…RIWD), 139–169 (GHTS…EGWS), 220–250 (TDQG…RVFN), and 262–291 (LDDG…RVWN).

This is an uncharacterized protein from Synechocystis sp. (strain ATCC 27184 / PCC 6803 / Kazusa).